The chain runs to 271 residues: Glutamate racemase (271 aa).

Residues 10-11 and 42-43 each bind substrate; these read DS and YG. Residue Cys73 is the Proton donor/acceptor of the active site. Position 74-75 (74-75) interacts with substrate; sequence NS. Cys183 functions as the Proton donor/acceptor in the catalytic mechanism. 184–185 provides a ligand contact to substrate; it reads TH.

This sequence belongs to the aspartate/glutamate racemases family.

The catalysed reaction is L-glutamate = D-glutamate. It participates in cell wall biogenesis; peptidoglycan biosynthesis. Functionally, provides the (R)-glutamate required for cell wall biosynthesis. This chain is Glutamate racemase, found in Saccharopolyspora erythraea (strain ATCC 11635 / DSM 40517 / JCM 4748 / NBRC 13426 / NCIMB 8594 / NRRL 2338).